The following is a 214-amino-acid chain: Adenylate kinase (214 aa).

10 to 15 (GAGKGT) is a binding site for ATP. The segment at 30-59 (STGDMLRAAIKAGSELGQKAKILMDMGQLV) is NMP. AMP contacts are provided by residues threonine 31, arginine 36, 57–59 (QLV), 85–88 (GFPR), and glutamine 92. The segment at 122–159 (GRRVHPASGRTYHIVYNPPKVEDKDDITGEDLILRADD) is LID. ATP is bound by residues arginine 123 and 132-133 (TY). 2 residues coordinate AMP: arginine 156 and arginine 167. Glutamine 200 is an ATP binding site.

The protein belongs to the adenylate kinase family. Monomer.

The protein resides in the cytoplasm. It carries out the reaction AMP + ATP = 2 ADP. It functions in the pathway purine metabolism; AMP biosynthesis via salvage pathway; AMP from ADP: step 1/1. In terms of biological role, catalyzes the reversible transfer of the terminal phosphate group between ATP and AMP. Plays an important role in cellular energy homeostasis and in adenine nucleotide metabolism. This Histophilus somni (strain 129Pt) (Haemophilus somnus) protein is Adenylate kinase.